The chain runs to 222 residues: N-(5'-phosphoribosyl)anthranilate isomerase (222 aa).

This sequence belongs to the TrpF family.

It carries out the reaction N-(5-phospho-beta-D-ribosyl)anthranilate = 1-(2-carboxyphenylamino)-1-deoxy-D-ribulose 5-phosphate. Its pathway is amino-acid biosynthesis; L-tryptophan biosynthesis; L-tryptophan from chorismate: step 3/5. This chain is N-(5'-phosphoribosyl)anthranilate isomerase, found in Xanthomonas campestris pv. campestris (strain 8004).